Here is a 355-residue protein sequence, read N- to C-terminus: MPFLGQDWRSPGQSWVKTADGWKRFLDEKSGSFVSDLSSYCNKEVYNKENLFNSLNYDVAAKKRKKDMLNSKTKTQYFHQEKWIYVHKGSTKERHGYCTLGEAFNRLDFSTAILDSRRFNYVVRLLELIAKSQLTSLSGIAQKNFMNILEKVVLKVLEDQQNIRLIRELLQTLYTSLCTLVQRVGKSVLVGNINMWVYRMETILHWQQQLNNIQITRPAFKGLTFTDLPLCLQLNIMQRLSDGRDLVSLGQVAPDLHVLSEDRLLWKKLCQYHFSERQIRKRLILSDKGQLDWKKMYFKLVRCYPRKEQYGDTLQLCRHCHILSWKGTDHPCTANNPESCSVSLSPQDFINLFKF.

Residues 62-67 (KKRKKD) carry the Nuclear localization signal motif. The Nuclear export signal motif lies at 169–173 (LLQTL). The F-box domain maps to 223–271 (LTFTDLPLCLQLNIMQRLSDGRDLVSLGQVAPDLHVLSEDRLLWKKLCQ). The Bipartite nuclear localization signal signature appears at 280–295 (RKRLILSDKGQLDWKK).

Part of the SCF (SKP1-CUL1-F-box) E3 ubiquitin-protein ligase complex SCF(FBXO32) formed of CUL1, SKP1, RBX1 and FBXO32.

It is found in the cytoplasm. It localises to the nucleus. It functions in the pathway protein modification; protein ubiquitination. Substrate recognition component of a SCF (SKP1-CUL1-F-box protein) E3 ubiquitin-protein ligase complex which mediates the ubiquitination and subsequent proteasomal degradation of target proteins. Probably recognizes and binds to phosphorylated target proteins during skeletal muscle atrophy. Recognizes TERF1. The polypeptide is F-box only protein 32 (FBXO32) (Sus scrofa (Pig)).